We begin with the raw amino-acid sequence, 108 residues long: MAPKKAQAPPPSSKPAKSGGGKQKKKKWSKGKQKEKVNNMVLFDKSTYDKLLSEAPKYKLITPSVLSDRLRISGSLARKAIRDLMARGSIRMVSAHASQQIYTRATNT.

The disordered stretch occupies residues M1 to K36. Residues K22–G31 show a composition bias toward basic residues.

Belongs to the eukaryotic ribosomal protein eS25 family.

This Solanum lycopersicum (Tomato) protein is Small ribosomal subunit protein eS25 (RPS25).